The chain runs to 133 residues: Small ribosomal subunit protein uS8 (133 aa).

It belongs to the universal ribosomal protein uS8 family. As to quaternary structure, part of the 30S ribosomal subunit. Contacts proteins S5 and S12.

One of the primary rRNA binding proteins, it binds directly to 16S rRNA central domain where it helps coordinate assembly of the platform of the 30S subunit. The chain is Small ribosomal subunit protein uS8 from Leptospira interrogans serogroup Icterohaemorrhagiae serovar copenhageni (strain Fiocruz L1-130).